The primary structure comprises 466 residues: Asparagine--tRNA ligase (466 aa).

The protein belongs to the class-II aminoacyl-tRNA synthetase family. In terms of assembly, homodimer.

It localises to the cytoplasm. The catalysed reaction is tRNA(Asn) + L-asparagine + ATP = L-asparaginyl-tRNA(Asn) + AMP + diphosphate + H(+). The protein is Asparagine--tRNA ligase of Colwellia psychrerythraea (strain 34H / ATCC BAA-681) (Vibrio psychroerythus).